The chain runs to 279 residues: Putative E3 ubiquitin-protein ligase C36B7.05c (279 aa).

The segment at Asp27–Ser122 adopts an FYVE-type zinc-finger fold. Residues Cys33, Cys36, Cys49, Cys52, Cys57, Cys60, Cys114, and Cys117 each contribute to the Zn(2+) site. The residue at position 200 (Ser200) is a Phosphoserine. The RING-type; atypical zinc finger occupies Cys230 to Ala273.

It localises to the cytoplasm. The protein localises to the nucleus. It is found in the endosome membrane. The protein resides in the vacuole membrane. The catalysed reaction is S-ubiquitinyl-[E2 ubiquitin-conjugating enzyme]-L-cysteine + [acceptor protein]-L-lysine = [E2 ubiquitin-conjugating enzyme]-L-cysteine + N(6)-ubiquitinyl-[acceptor protein]-L-lysine.. The protein operates within protein modification; protein ubiquitination. In terms of biological role, functions as an E3 ubiquitin-protein ligase. Binds phospholipid vesicles containing phosphatidylinositol 3-phosphate. The protein is Putative E3 ubiquitin-protein ligase C36B7.05c of Schizosaccharomyces pombe (strain 972 / ATCC 24843) (Fission yeast).